A 1417-amino-acid polypeptide reads, in one-letter code: MAPTKKPQKNKQSKNEIASSLIPNSGHKKPSKAPKLLISPENEDRLRRLLLNFRRTPSPVTATLSVTQKRKKLNNLYENLSCEGFLDNQIELVLSSLRDGATLETALDWLCLNLPSHELPVNFSNGASRFPSTGRSVAVISKSKKDWNVSAESSVQEVKEVPESEVLVRVKSKRDEEEEDSLSSCQPSQADWIHQYMKRLEEEELESSDDERDKVSGPRSFEVIAKEYCVERYNAIKAKRKGDKSGQSQAGLAICKLKEEMNALGPSEAILESEFQRDRQDCEGAREKEVASSVLDDVHESVNADAFFFQLFDDLTLDTNPVGSCKSEEQESVVSNDSLDDLDLGDLFDEDVPPYVPSPHELLELQKKEIMRELCNEKHLTKLNGIWKKGEAQKIPKALLHQLCQRSGWIAPKFNKVTGEGRNFSYTTSVMRKSSGFGKSRQAGGLVTIQLPHQVEDFESIQDAQNRVAAFALHKLFSDLPVHFAITEPYASLVLIWKQEESLGITSREEQRREKFVESLLEADNFSLTTTSRGIHSALPMVDSCVKENDDLDVVKSNHRARRNSSMAAECSSLKQKQENKKKMQKYKDMLKTRAALPISEVKKDILQKLKEKDVLVVCGETGSGKTTQVPQFILDDMIDSGHGGYCNIICTQPRAITVAQRVADERCEPPPGFDNSVVAYQVRHQNARSDKTRLLFCTTGILLRKLVGDTTLKDVTHIIVDEVHERSLMGDFLLIILKSLIEKQSWDNALPKLKVILMSATVDAHQFSRYFGQCPIITAQGRTHPVTTYFLEDIYERTKYLLASDSPAALSSDTSITDKLGSVNVPRGKKNLMLAGWGDSYLVSEDSLNTSYDSIKYIASAVVDYDLLEELICHIDDTCEEGAILVFLPGMSEINMLLNRLAASYRFRGASGDWLLPLHSSIASTEQKKVFLRPPKGIRKVIIATNIAETSITIEDVVYVIDSGKHKENRYNPHKKLSSMVEDWVSKANARQRMGRAGRVKPGHCFSLYTRHRFEKLMRPYQVPEMLRVPLVELCLHIKLLGLGQIKPFLSKALEPPSESAINSAILLLHKVGALEGDEELTPLGHHLAKLPVDLLIGKMLLYGGIFGCLSPILSIAAFLSCCKSPFVYAKDEQNVDRVKLALLSDKLESSSNLNNNDRQSDHLLMVVAYEKWVRILHEQGFKAAESFCESKFLNSSVMRMMRERRVEFGMLLADIGLINLPKGKGRRKENFDVWFSDKTQPFNMYSQEPEVVKAILCAGLCPNIAEGLVNRLTKPAEETQRYAVWHDGKREVHIHRNSINKNCKAFQYPFIVFLEKLETKKVVYLQDTTVVSPFSILLFGGSINVHHQSGSVTIDGWLKLTAPAQTAVLFKELRLTLHSILKDLIRKPEKSGIVHNEVVKSMVHLLIEEGKPQHT.

The span at 1–12 (MAPTKKPQKNKQ) shows a compositional bias: basic residues. The disordered stretch occupies residues 1–37 (MAPTKKPQKNKQSKNEIASSLIPNSGHKKPSKAPKLL). The N-terminal 61 residues, 1-61 (MAPTKKPQKN…NFRRTPSPVT (61 aa)), are a transit peptide targeting the chloroplast. One can recognise a Helicase ATP-binding domain in the interval 607 to 781 (LQKLKEKDVL…FGQCPIITAQ (175 aa)). Residue 620 to 627 (GETGSGKT) coordinates ATP. A DEIH box motif is present at residues 722-725 (DEVH). A Helicase C-terminal domain is found at 868–1043 (LLEELICHID…ELCLHIKLLG (176 aa)).

This sequence belongs to the DExH box helicase family.

It localises to the plastid. The protein resides in the chloroplast. It carries out the reaction ATP + H2O = ADP + phosphate + H(+). In Arabidopsis thaliana (Mouse-ear cress), this protein is DExH-box ATP-dependent RNA helicase DExH4, chloroplastic.